An 889-amino-acid polypeptide reads, in one-letter code: Alanine--tRNA ligase (889 aa).

Zn(2+) is bound by residues H569, H573, C671, and H675.

Belongs to the class-II aminoacyl-tRNA synthetase family. Zn(2+) serves as cofactor.

It is found in the cytoplasm. The catalysed reaction is tRNA(Ala) + L-alanine + ATP = L-alanyl-tRNA(Ala) + AMP + diphosphate. In terms of biological role, catalyzes the attachment of alanine to tRNA(Ala) in a two-step reaction: alanine is first activated by ATP to form Ala-AMP and then transferred to the acceptor end of tRNA(Ala). Also edits incorrectly charged Ser-tRNA(Ala) and Gly-tRNA(Ala) via its editing domain. This is Alanine--tRNA ligase from Parasynechococcus marenigrum (strain WH8102).